The sequence spans 560 residues: 2-succinyl-5-enolpyruvyl-6-hydroxy-3-cyclohexene-1-carboxylate synthase (560 aa).

Belongs to the TPP enzyme family. MenD subfamily. In terms of assembly, homodimer. Mg(2+) is required as a cofactor. It depends on Mn(2+) as a cofactor. The cofactor is thiamine diphosphate.

It catalyses the reaction isochorismate + 2-oxoglutarate + H(+) = 5-enolpyruvoyl-6-hydroxy-2-succinyl-cyclohex-3-ene-1-carboxylate + CO2. It participates in quinol/quinone metabolism; 1,4-dihydroxy-2-naphthoate biosynthesis; 1,4-dihydroxy-2-naphthoate from chorismate: step 2/7. Its pathway is quinol/quinone metabolism; menaquinone biosynthesis. Its function is as follows. Catalyzes the thiamine diphosphate-dependent decarboxylation of 2-oxoglutarate and the subsequent addition of the resulting succinic semialdehyde-thiamine pyrophosphate anion to isochorismate to yield 2-succinyl-5-enolpyruvyl-6-hydroxy-3-cyclohexene-1-carboxylate (SEPHCHC). The sequence is that of 2-succinyl-5-enolpyruvyl-6-hydroxy-3-cyclohexene-1-carboxylate synthase from Lactococcus lactis subsp. lactis (strain IL1403) (Streptococcus lactis).